The sequence spans 224 residues: Paired immunoglobulin-like type 2 receptor beta (224 aa).

The first 28 residues, 1–28 (MALLISLPGGTPAMAQVLLLLSSGCLHA), serve as a signal peptide directing secretion. Residues 29 to 195 (GNSERYNRKN…NPSLMNLGAM (167 aa)) lie on the Extracellular side of the membrane. 3 N-linked (GlcNAc...) asparagine glycosylation sites follow: Asn-90, Asn-107, and Asn-154. A helical transmembrane segment spans residues 196–216 (VTMLLAKVLVIVLVYGWMIFL). At 217 to 224 (RWKQRPAH) the chain is on the cytoplasmic side.

As to quaternary structure, interacts with CD99. Probably associates with DAP12. As to expression, widely expressed with highest levels in spleen, liver and lung. Predominantly expressed by natural killer cells, macrophages, and granulocytes and dendritic cells (BM-DC).

It is found in the membrane. In terms of biological role, paired receptors consist of highly related activating and inhibitory receptors and are widely involved in the regulation of the immune system. PILRB is thought to act as a cellular signaling activating receptor that associates with ITAM-bearing adapter molecules on the cell surface. Seems to associate with DAP12 and is a receptor for CD99. May be involved in target cell recognition by natural killer cells and in activation of dendritic cells. In Mus musculus (Mouse), this protein is Paired immunoglobulin-like type 2 receptor beta (Pilrb).